Consider the following 233-residue polypeptide: Hydroxyacylglutathione hydrolase (233 aa).

7 residues coordinate Zn(2+): His-52, His-54, Asp-56, His-57, His-108, Asp-125, and His-163.

It belongs to the metallo-beta-lactamase superfamily. Glyoxalase II family. As to quaternary structure, monomer. Requires Zn(2+) as cofactor.

It catalyses the reaction an S-(2-hydroxyacyl)glutathione + H2O = a 2-hydroxy carboxylate + glutathione + H(+). The protein operates within secondary metabolite metabolism; methylglyoxal degradation; (R)-lactate from methylglyoxal: step 2/2. In terms of biological role, thiolesterase that catalyzes the hydrolysis of S-D-lactoyl-glutathione to form glutathione and D-lactic acid. The chain is Hydroxyacylglutathione hydrolase from Actinobacillus succinogenes (strain ATCC 55618 / DSM 22257 / CCUG 43843 / 130Z).